Reading from the N-terminus, the 315-residue chain is Acetyl-coenzyme A carboxylase carboxyl transferase subunit alpha (315 aa).

The CoA carboxyltransferase C-terminal domain occupies 40 to 293 (LQDKSKTLTE…RAELSSQLAM (254 aa)).

The protein belongs to the AccA family. As to quaternary structure, acetyl-CoA carboxylase is a heterohexamer composed of biotin carboxyl carrier protein (AccB), biotin carboxylase (AccC) and two subunits each of ACCase subunit alpha (AccA) and ACCase subunit beta (AccD).

It is found in the cytoplasm. The enzyme catalyses N(6)-carboxybiotinyl-L-lysyl-[protein] + acetyl-CoA = N(6)-biotinyl-L-lysyl-[protein] + malonyl-CoA. It participates in lipid metabolism; malonyl-CoA biosynthesis; malonyl-CoA from acetyl-CoA: step 1/1. Component of the acetyl coenzyme A carboxylase (ACC) complex. First, biotin carboxylase catalyzes the carboxylation of biotin on its carrier protein (BCCP) and then the CO(2) group is transferred by the carboxyltransferase to acetyl-CoA to form malonyl-CoA. This is Acetyl-coenzyme A carboxylase carboxyl transferase subunit alpha from Pseudomonas fluorescens (strain Pf0-1).